The sequence spans 166 residues: Interferon gamma (166 aa).

The N-terminal stretch at 1–23 (MNYTSYILAFQLCVILCSSGYYC) is a signal peptide. Glutamine 24 bears the Pyrrolidone carboxylic acid mark. N-linked (GlcNAc...) asparagine glycans are attached at residues asparagine 39 and asparagine 106.

Belongs to the type II (or gamma) interferon family. Homodimer. Interacts with IFNGR1 (via extracellular domain); this interaction promotes IFNGR1 dimerization. Released primarily from activated T lymphocytes.

The protein resides in the secreted. Its function is as follows. Type II interferon produced by immune cells such as T-cells and NK cells that plays crucial roles in antimicrobial, antiviral, and antitumor responses by activating effector immune cells and enhancing antigen presentation. Primarily signals through the JAK-STAT pathway after interaction with its receptor IFNGR1 to affect gene regulation. Upon IFNG binding, IFNGR1 intracellular domain opens out to allow association of downstream signaling components JAK2, JAK1 and STAT1, leading to STAT1 activation, nuclear translocation and transcription of IFNG-regulated genes. Many of the induced genes are transcription factors such as IRF1 that are able to further drive regulation of a next wave of transcription. Plays a role in class I antigen presentation pathway by inducing a replacement of catalytic proteasome subunits with immunoproteasome subunits. In turn, increases the quantity, quality, and repertoire of peptides for class I MHC loading. Increases the efficiency of peptide generation also by inducing the expression of activator PA28 that associates with the proteasome and alters its proteolytic cleavage preference. Up-regulates as well MHC II complexes on the cell surface by promoting expression of several key molecules such as cathepsins B/CTSB, H/CTSH, and L/CTSL. Participates in the regulation of hematopoietic stem cells during development and under homeostatic conditions by affecting their development, quiescence, and differentiation. The chain is Interferon gamma (IFNG) from Ailuropoda melanoleuca (Giant panda).